The chain runs to 53 residues: MAVPKKRTSISKKRIRNTLWKKKGYFTTLKAFSLAQSIFTGNSKSFFCNKYKR.

Belongs to the bacterial ribosomal protein bL32 family.

The protein resides in the plastid. It localises to the chloroplast. The protein is Large ribosomal subunit protein bL32c of Glycine max (Soybean).